The chain runs to 62 residues: Large ribosomal subunit protein bL28 (62 aa).

The protein belongs to the bacterial ribosomal protein bL28 family.

The sequence is that of Large ribosomal subunit protein bL28 from Frankia casuarinae (strain DSM 45818 / CECT 9043 / HFP020203 / CcI3).